We begin with the raw amino-acid sequence, 1314 residues long: AT-rich interactive domain-containing protein 4B (1314 aa).

2 disordered regions span residues 123-169 (LPLT…RKQT) and 266-306 (KTEL…EPFP). Phosphoserine is present on residues Ser-276, Ser-295, and Ser-296. Acidic residues predominate over residues 277 to 305 (EAEEEEEEEDDEKEKEDNSSEEEEEIEPF). Residues 306-398 (PEERENFLQQ…YLYGFEEYCR (93 aa)) enclose the ARID domain. Residues Lys-428 and Lys-461 each participate in a glycyl lysine isopeptide (Lys-Gly) (interchain with G-Cter in SUMO2) cross-link. Basic and acidic residues predominate over residues 439–464 (NVEDSKNVMPKEETPAEDESERKENI). Disordered regions lie at residues 439 to 577 (NVED…KVQV), 635 to 678 (IKHR…SPEM), 709 to 888 (ASES…EEKR), 943 to 1215 (KELF…RLPK), and 1256 to 1290 (VASI…SITA). Phosphoserine is present on Ser-482. The segment covering 486-511 (KEAHITKLEENENLEDKDGGRARTEE) has biased composition (basic and acidic residues). The span at 531–567 (NKEEDEDDEEIEEEEEEDEEEDEDEDDDDNNEEEEFE) shows a compositional bias: acidic residues. The region spanning 572–624 (GMKVQVRYGRGKNQKMYEASIKDSDVEGGEALYLVHYCGWNVRYDEWIKADKI) is the Tudor-knot domain. Positions 643-656 (NKLDKEKDRDEKYS) are enriched in basic and acidic residues. Phosphoserine occurs at positions 666, 668, 675, and 717. Composition is skewed to basic and acidic residues over residues 722–754 (ERCT…KEEQ) and 778–787 (SPERLRKDME). Lys-751 participates in a covalent cross-link: Glycyl lysine isopeptide (Lys-Gly) (interchain with G-Cter in SUMO2). Phosphoserine is present on residues Ser-778 and Ser-790. Residues 788 to 800 (AISEDTDFEEEDE) are compositionally biased toward acidic residues. At Thr-793 the chain carries Phosphothreonine. Basic and acidic residues-rich tracts occupy residues 808-817 (VKKDTTDKAL), 841-853 (GKKE…KEPL), and 997-1012 (KPIE…RKTE). Over residues 1013-1023 (FPSSGSNSVLN) the composition is skewed to polar residues. A Phosphoserine modification is found at Ser-1016. Residue Thr-1028 is modified to Phosphothreonine. The segment covering 1030-1051 (ESPSSVTITEASQQQSSVTVSV) has biased composition (low complexity). A Phosphoserine modification is found at Ser-1031. Basic and acidic residues predominate over residues 1058 to 1067 (EEVRSIKSET). Residues 1089 to 1103 (SSPAGFDASVSSSSS) are compositionally biased toward low complexity. A compositionally biased stretch (basic residues) spans 1132-1150 (KKQKRSHKATVVNNKKKGK). Thr-1152 carries the phosphothreonine modification. 4 positions are modified to phosphoserine: Ser-1154, Ser-1155, Ser-1157, and Ser-1161. The span at 1164 to 1186 (ESVTKTQTIKSVPTGMKTHNSKS) shows a compositional bias: polar residues. Basic and acidic residues predominate over residues 1198–1210 (RNGDKDPDLKEPS). A coiled-coil region spans residues 1227 to 1272 (ENMTSAERISILQEKLQEIRKHYLSLKSEVASIDRRRKRLKKKERE). Over residues 1274 to 1290 (AATSSSSSSPSSSSITA) the composition is skewed to low complexity.

Component of a Sin3A corepressor complex consisting of SIN3A, SAP130, SUDS3/SAP45, SAP180, HDAC1 and HDAC2. Interacts with ARID4A. Interacts with AR. Expressed in Sertoli cells of the testis.

It localises to the nucleus. Acts as a transcriptional repressor. May function in the assembly and/or enzymatic activity of the Sin3A corepressor complex or in mediating interactions between the complex and other regulatory complexes. Plays a role in the regulation of epigenetic modifications at the PWS/AS imprinting center near the SNRPN promoter, where it might function as part of a complex with RB1 and ARID4A. Involved in spermatogenesis, together with ARID4A, where it functions as a transcriptional coactivator for AR (androgen receptor) and enhances expression of genes required for sperm maturation. Regulates expression of the tight junction protein CLDN3 in the testis, which is important for integrity of the blood-testis barrier. Plays a role in myeloid homeostasis where it regulates the histone methylation state of bone marrow cells and expression of various genes involved in hematopoiesis. May function as a leukemia suppressor. This Mus musculus (Mouse) protein is AT-rich interactive domain-containing protein 4B (Arid4b).